We begin with the raw amino-acid sequence, 358 residues long: Aminomethyltransferase (358 aa).

Belongs to the GcvT family. In terms of assembly, the glycine cleavage system is composed of four proteins: P, T, L and H.

The catalysed reaction is N(6)-[(R)-S(8)-aminomethyldihydrolipoyl]-L-lysyl-[protein] + (6S)-5,6,7,8-tetrahydrofolate = N(6)-[(R)-dihydrolipoyl]-L-lysyl-[protein] + (6R)-5,10-methylene-5,6,7,8-tetrahydrofolate + NH4(+). Functionally, the glycine cleavage system catalyzes the degradation of glycine. This Francisella tularensis subsp. mediasiatica (strain FSC147) protein is Aminomethyltransferase.